The sequence spans 347 residues: MTERLLIKALSGGKNTKIITLNGKKMTKMPSALGKLPGLKTLVLQNNLIPKVCPELCNLTQLTTLNLGNNLLEEVPEEMKYLTSLKNLHLSGNRICRFAPGACDGLQNLILLNLNNNHLTQLPQEVSRLKSLTYMSINYNQLASIPRELCFLENLVELQLNYNQLICIPEEIKFLKKLQKLLLARNNIGVLPEELCDLKKLRILDIAGNIIQIFPSGFQDLKLREFYCEGNPLFLQQPVISTQQENVWSLQEITSRFVMNQLAENNPFLMDDIERYPQVRSMISQGKTCAICGQYFITVWLECVRFVPPPKDWKISKNLKLVPLQVLICSYKCFTQRDPNLFGIAQV.

8 LRR repeats span residues 38-60 (GLKT…CNLT), 61-82 (QLTT…MKYL), 84-105 (SLKN…ACDG), 108-129 (NLIL…VSRL), 131-153 (SLTY…CFLE), 154-175 (NLVE…IKFL), 177-199 (KLQK…CDLK), and 200-222 (KLRI…QDLK).

This sequence belongs to the LRRC69 family.

The chain is Leucine-rich repeat-containing protein 69 (LRRC69) from Homo sapiens (Human).